The primary structure comprises 328 residues: MIFSILEHILTHISFSVVSIVLTIYFFTLLVNLDEIIGFFDSSDKGIVITFFGITGLLFTRWIYSGHFPLSNLYESLIFLSWAFSIIHMVSYFNKKKKNHLNAITAPSAIFIQGFATSGLLNKMPQSAILVPALQSQWLMMHVSMMILGYGALLCGSLLSIALLVITFRKVGPTFWKKNIKKKFLLNELFSFDVFYYINERNSILLQQNINFSFSRNYYRYQLIEQLDYWSFRIISLGFIFLTVGILSGAVWANETWGSYWNWDPKETWAFITWTIFAIYLHIKTNRNVRGINSAIVASIGFLLIWICYFGVNLLGIGLHSYGSFTSN.

Helical transmembrane passes span 13-33 (ISFS…LVNL), 46-66 (GIVI…IYSG), 73-93 (LYES…VSYF), 101-121 (LNAI…SGLL), 146-166 (MILG…LLVI), 234-254 (IISL…VWAN), 263-283 (WDPK…YLHI), and 295-315 (AIVA…VNLL).

The protein belongs to the CcmF/CycK/Ccl1/NrfE/CcsA family. As to quaternary structure, may interact with Ccs1.

Its subcellular location is the plastid. The protein resides in the chloroplast thylakoid membrane. Its function is as follows. Required during biogenesis of c-type cytochromes (cytochrome c6 and cytochrome f) at the step of heme attachment. In Barbarea verna (Land cress), this protein is Cytochrome c biogenesis protein CcsA.